Reading from the N-terminus, the 260-residue chain is Indole-3-glycerol phosphate synthase (260 aa).

This sequence belongs to the TrpC family.

It carries out the reaction 1-(2-carboxyphenylamino)-1-deoxy-D-ribulose 5-phosphate + H(+) = (1S,2R)-1-C-(indol-3-yl)glycerol 3-phosphate + CO2 + H2O. The protein operates within amino-acid biosynthesis; L-tryptophan biosynthesis; L-tryptophan from chorismate: step 4/5. This is Indole-3-glycerol phosphate synthase from Neisseria gonorrhoeae (strain NCCP11945).